Here is an 89-residue protein sequence, read N- to C-terminus: Putative membrane protein insertion efficiency factor (89 aa).

Positions 68-89 (VPPPNSDARNAPHEAEASSHRL) are disordered. Residues 77–89 (NAPHEAEASSHRL) show a composition bias toward basic and acidic residues.

The protein belongs to the UPF0161 family.

The protein resides in the cell inner membrane. Its function is as follows. Could be involved in insertion of integral membrane proteins into the membrane. The chain is Putative membrane protein insertion efficiency factor from Burkholderia mallei (strain SAVP1).